We begin with the raw amino-acid sequence, 412 residues long: Argininosuccinate synthase (412 aa).

ATP is bound by residues 10 to 18 (AYSGGLDTS) and Ala-36. Residues Tyr-87 and Ser-92 each coordinate L-citrulline. 115-123 (SHGATGKGN) provides a ligand contact to ATP. Residues Thr-119, Asn-123, and Asp-124 each contribute to the L-aspartate site. Asn-123 contacts L-citrulline. Residues Arg-127, Ser-180, Ser-189, Glu-270, and Tyr-282 each contribute to the L-citrulline site.

It belongs to the argininosuccinate synthase family. Homotetramer.

The enzyme catalyses L-citrulline + L-aspartate + ATP = 2-(N(omega)-L-arginino)succinate + AMP + diphosphate + H(+). Its pathway is amino-acid biosynthesis; L-arginine biosynthesis; L-arginine from L-ornithine and carbamoyl phosphate: step 2/3. It functions in the pathway nitrogen metabolism; urea cycle; (N(omega)-L-arginino)succinate from L-aspartate and L-citrulline: step 1/1. This Aedes aegypti (Yellowfever mosquito) protein is Argininosuccinate synthase.